A 1019-amino-acid polypeptide reads, in one-letter code: Probable LRR receptor-like serine/threonine-protein kinase At1g29720 (1019 aa).

A signal peptide spans 1 to 19 (MSIILWSFFLFFTIILSSL). Residues 20–615 (TNITTLASFS…EKTKHHIKYP (596 aa)) lie on the Extracellular side of the membrane. N-linked (GlcNAc...) asparagine glycans are attached at residues N21, N79, and N90. LRR repeat units lie at residues 93-117 (ICRITELALKTMSLRGKLPPELTKL), 118-141 (PYLKSIELCRNYLSGTIPMEWAKM), 143-165 (YLTSISVCANNLSGNLPAGLQNF), 166-189 (KNLTFLGVEGNQFSGPIPDELGNL), 190-212 (TSLTGLELASNKFTGILPGTLAR), 214-236 (VNLERVRICDNNFTGIIPAYIGN), 237-261 (WTRLQKLHLYASGLTGPIPDAVVRL), 263-283 (NLLELSLSDTTGIKSFPNLSS), 284-307 (KGLKRLILRNVGLSGPIPSYIWNL), 308-330 (TDLKILDLSFNKLNGIVQGVQNP), 332-351 (KNIYLTGNLLSGNIESGGLL), 352-374 (NSQSYIDLSYNNFSWSSSCQKGS), and 375-398 (TINTYQSSYSKNNLTGLPPCAVPA). N-linked (GlcNAc...) asparagine glycosylation is found at N153, N167, and N188. Residues N225 and N236 are each glycosylated (N-linked (GlcNAc...) asparagine). 2 N-linked (GlcNAc...) asparagine glycosylation sites follow: N280 and N306. N-linked (GlcNAc...) asparagine glycans are attached at residues N363, N387, N469, and N558. The chain crosses the membrane as a helical span at residues 616 to 636 (LILGASGALVTIVLLAVGIYA). Over 637 to 1019 (RGIYRRDNNR…STVENSSSSL (383 aa)) the chain is Cytoplasmic. Residues 673–946 (FDQANKLGEG…EAVKMLEGEI (274 aa)) form the Protein kinase domain. ATP is bound by residues 679–687 (LGEGGFGSV) and K701. Y746 carries the phosphotyrosine modification. Residue D797 is the Proton acceptor of the active site. Phosphoserine is present on S830. T831 and T836 each carry phosphothreonine. Y844 is modified (phosphotyrosine).

Belongs to the protein kinase superfamily. Ser/Thr protein kinase family.

The protein resides in the cell membrane. It carries out the reaction L-seryl-[protein] + ATP = O-phospho-L-seryl-[protein] + ADP + H(+). The catalysed reaction is L-threonyl-[protein] + ATP = O-phospho-L-threonyl-[protein] + ADP + H(+). This chain is Probable LRR receptor-like serine/threonine-protein kinase At1g29720 (RFK1), found in Arabidopsis thaliana (Mouse-ear cress).